A 65-amino-acid chain; its full sequence is Putative antitoxin VapB7 (65 aa).

It belongs to the UPF0165 family.

In terms of biological role, possibly the antitoxin component of a type II toxin-antitoxin (TA) system. Its cognate toxin is VapC7 (Potential). This Archaeoglobus fulgidus (strain ATCC 49558 / DSM 4304 / JCM 9628 / NBRC 100126 / VC-16) protein is Putative antitoxin VapB7 (vapB7).